The chain runs to 149 residues: Large ribosomal subunit protein bL9 (149 aa).

This sequence belongs to the bacterial ribosomal protein bL9 family.

In terms of biological role, binds to the 23S rRNA. The protein is Large ribosomal subunit protein bL9 of Bacillus velezensis (strain DSM 23117 / BGSC 10A6 / LMG 26770 / FZB42) (Bacillus amyloliquefaciens subsp. plantarum).